The sequence spans 269 residues: 5'-nucleotidase SurE (269 aa).

Positions 11, 12, 43, and 101 each coordinate a divalent metal cation.

The protein belongs to the SurE nucleotidase family. It depends on a divalent metal cation as a cofactor.

The protein resides in the cytoplasm. It catalyses the reaction a ribonucleoside 5'-phosphate + H2O = a ribonucleoside + phosphate. Its function is as follows. Nucleotidase that shows phosphatase activity on nucleoside 5'-monophosphates. The polypeptide is 5'-nucleotidase SurE (Prochlorococcus marinus (strain MIT 9301)).